Consider the following 177-residue polypeptide: Small ribosomal subunit protein uS13 (177 aa).

Positions 132–145 (GVRHKRGQKVRGQR) are enriched in basic residues. The segment at 132–177 (GVRHKRGQKVRGQRTKSTGRTEGTIGVNVEAIKEEQAEDAAAEDDE) is disordered. A compositionally biased stretch (acidic residues) spans 167–177 (QAEDAAAEDDE).

Belongs to the universal ribosomal protein uS13 family. In terms of assembly, part of the 30S ribosomal subunit. Forms a loose heterodimer with protein S19. Forms two bridges to the 50S subunit in the 70S ribosome.

Located at the top of the head of the 30S subunit, it contacts several helices of the 16S rRNA. In the 70S ribosome it contacts the 23S rRNA (bridge B1a) and protein L5 of the 50S subunit (bridge B1b), connecting the 2 subunits; these bridges are implicated in subunit movement. The sequence is that of Small ribosomal subunit protein uS13 from Haloarcula marismortui (strain ATCC 43049 / DSM 3752 / JCM 8966 / VKM B-1809) (Halobacterium marismortui).